The chain runs to 2296 residues: Protein Ycf2 (2296 aa).

Position 1650–1657 (1650–1657 (GSIGIGRS)) interacts with ATP.

Belongs to the Ycf2 family.

Its subcellular location is the plastid. It localises to the chloroplast stroma. Probable ATPase of unknown function. Its presence in a non-photosynthetic plant (Epifagus virginiana) and experiments in tobacco indicate that it has an essential function which is probably not related to photosynthesis. This Arabis hirsuta (Hairy rock-cress) protein is Protein Ycf2.